A 400-amino-acid polypeptide reads, in one-letter code: Acetate kinase (400 aa).

Mg(2+) is bound at residue Asn7. Residue Lys14 coordinates ATP. Arg91 lines the substrate pocket. Asp148 (proton donor/acceptor) is an active-site residue. ATP-binding positions include 208–212 (HVGNG), 283–285 (DMR), and 331–335 (GVGEN). A Mg(2+)-binding site is contributed by Glu385.

Belongs to the acetokinase family. In terms of assembly, homodimer. The cofactor is Mg(2+). It depends on Mn(2+) as a cofactor.

The protein localises to the cytoplasm. The enzyme catalyses acetate + ATP = acetyl phosphate + ADP. The protein operates within metabolic intermediate biosynthesis; acetyl-CoA biosynthesis; acetyl-CoA from acetate: step 1/2. In terms of biological role, catalyzes the formation of acetyl phosphate from acetate and ATP. Can also catalyze the reverse reaction. The polypeptide is Acetate kinase (Parabacteroides distasonis (strain ATCC 8503 / DSM 20701 / CIP 104284 / JCM 5825 / NCTC 11152)).